Consider the following 420-residue polypeptide: Gamma-glutamyl phosphate reductase (420 aa).

The protein belongs to the gamma-glutamyl phosphate reductase family.

It is found in the cytoplasm. It carries out the reaction L-glutamate 5-semialdehyde + phosphate + NADP(+) = L-glutamyl 5-phosphate + NADPH + H(+). It participates in amino-acid biosynthesis; L-proline biosynthesis; L-glutamate 5-semialdehyde from L-glutamate: step 2/2. Catalyzes the NADPH-dependent reduction of L-glutamate 5-phosphate into L-glutamate 5-semialdehyde and phosphate. The product spontaneously undergoes cyclization to form 1-pyrroline-5-carboxylate. The sequence is that of Gamma-glutamyl phosphate reductase from Cereibacter sphaeroides (strain KD131 / KCTC 12085) (Rhodobacter sphaeroides).